The chain runs to 621 residues: Chaperone protein HscA homolog (621 aa).

Belongs to the heat shock protein 70 family.

In terms of biological role, chaperone involved in the maturation of iron-sulfur cluster-containing proteins. Has a low intrinsic ATPase activity which is markedly stimulated by HscB. This Azotobacter vinelandii (strain DJ / ATCC BAA-1303) protein is Chaperone protein HscA homolog.